The primary structure comprises 288 residues: Prepilin leader peptidase/N-methyltransferase (288 aa).

Residues 14–34 (FITLATVLGLLVGSFLNVVVY) form a helical membrane-spanning segment. Cys-71, Cys-74, Cys-96, and Cys-99 together coordinate Zn(2+). The next 6 membrane-spanning stretches (helical) occupy residues 103–123 (ISVR…VVAW), 127–147 (ASVE…LSLI), 158–178 (IVLP…WVPL), 182–202 (VCGA…FKLV), 227–247 (VLPL…VYLL), and 254–274 (MGTA…AVLW).

This sequence belongs to the peptidase A24 family. The cofactor is Zn(2+).

It localises to the cell inner membrane. The catalysed reaction is Typically cleaves a -Gly-|-Phe- bond to release an N-terminal, basic peptide of 5-8 residues from type IV prepilin, and then N-methylates the new N-terminal amino group, the methyl donor being S-adenosyl-L-methionine.. Plays an essential role in type IV pili and type II pseudopili formation by proteolytically removing the leader sequence from substrate proteins and subsequently monomethylating the alpha-amino group of the newly exposed N-terminal phenylalanine. This Pseudomonas putida (Arthrobacter siderocapsulatus) protein is Prepilin leader peptidase/N-methyltransferase (pilD).